Here is a 224-residue protein sequence, read N- to C-terminus: Peroxiredoxin-6 (224 aa).

The Thioredoxin domain maps to 5 to 169 (LLLGDEAPNF…ILRVVDSLQL (165 aa)). The segment at 31–40 (DSWGILFSHP) is required and sufficient for targeting to lysosomes and lamellar bodies. A Phosphothreonine modification is found at threonine 44. Cysteine 47 functions as the Cysteine sulfenic acid (-SOH) intermediate; for peroxidase activity in the catalytic mechanism. Lysine 63 is subject to N6-acetyllysine. Tyrosine 89 bears the Phosphotyrosine mark. Aspartate 140 serves as the catalytic For phospholipase activity. Residue threonine 177 is modified to Phosphothreonine; by MAPK. Residue lysine 209 is modified to N6-acetyllysine; alternate. At lysine 209 the chain carries N6-succinyllysine; alternate.

Belongs to the peroxiredoxin family. Prx6 subfamily. Homodimer. Interacts with GSTP1; mediates PRDX6 glutathionylation and regeneration. Interacts with APEX1. Interacts with STH. May interact with FAM168B. May interact with HTR2A. In terms of processing, phosphorylation at Thr-177 by MAP kinases increases the phospholipase activity of the enzyme. Phosphorylated form exhibits a greater lysophosphatidylcholine acyltransferase activity compared to the non-phosphorylated form. Post-translationally, irreversibly inactivated by overoxidation of Cys-47 to sulfinic acid (Cys-SO(2)H) and sulfonic acid (Cys-SO(3)H) forms upon oxidative stress.

It is found in the cytoplasm. The protein localises to the lysosome. The enzyme catalyses a hydroperoxide + 2 glutathione = an alcohol + glutathione disulfide + H2O. It catalyses the reaction a 1,2-diacyl-sn-glycero-3-phosphocholine + H2O = a 1-acyl-sn-glycero-3-phosphocholine + a fatty acid + H(+). It carries out the reaction a 1-acyl-sn-glycero-3-phosphocholine + an acyl-CoA = a 1,2-diacyl-sn-glycero-3-phosphocholine + CoA. The catalysed reaction is 1-hexadecanoyl-sn-glycero-3-phosphocholine + hexadecanoyl-CoA = 1,2-dihexadecanoyl-sn-glycero-3-phosphocholine + CoA. The enzyme catalyses 1,2-dihexadecanoyl-sn-glycero-3-phosphocholine + H2O = 1-hexadecanoyl-sn-glycero-3-phosphocholine + hexadecanoate + H(+). Its function is as follows. Thiol-specific peroxidase that catalyzes the reduction of hydrogen peroxide and organic hydroperoxides to water and alcohols, respectively. Can reduce H(2)O(2) and short chain organic, fatty acid, and phospholipid hydroperoxides. Also has phospholipase activity, can therefore either reduce the oxidized sn-2 fatty acyl group of phospholipids (peroxidase activity) or hydrolyze the sn-2 ester bond of phospholipids (phospholipase activity). These activities are dependent on binding to phospholipids at acidic pH and to oxidized phospholipds at cytosolic pH. Plays a role in cell protection against oxidative stress by detoxifying peroxides and in phospholipid homeostasis. Exhibits acyl-CoA-dependent lysophospholipid acyltransferase which mediates the conversion of lysophosphatidylcholine (1-acyl-sn-glycero-3-phosphocholine or LPC) into phosphatidylcholine (1,2-diacyl-sn-glycero-3-phosphocholine or PC). Shows a clear preference for LPC as the lysophospholipid and for palmitoyl CoA as the fatty acyl substrate. This is Peroxiredoxin-6 (Prdx6) from Rattus norvegicus (Rat).